A 619-amino-acid chain; its full sequence is Chaperone protein DnaK (619 aa).

Thr179 carries the phosphothreonine; by autocatalysis modification. Residues 584 to 619 (QAKAQGAAGPQPGAQAQGQPNDGGKEDVVEAEVVDK) form a disordered region. The segment covering 585-605 (AKAQGAAGPQPGAQAQGQPND) has biased composition (low complexity). Positions 606 to 619 (GGKEDVVEAEVVDK) are enriched in basic and acidic residues.

The protein belongs to the heat shock protein 70 family.

Acts as a chaperone. The protein is Chaperone protein DnaK of Elusimicrobium minutum (strain Pei191).